The primary structure comprises 118 residues: UPF0102 protein DICTH_1420 (118 aa).

Belongs to the UPF0102 family.

The chain is UPF0102 protein DICTH_1420 from Dictyoglomus thermophilum (strain ATCC 35947 / DSM 3960 / H-6-12).